Here is a 440-residue protein sequence, read N- to C-terminus: Oligodendrocyte-myelin glycoprotein (440 aa).

The signal sequence occupies residues Met1–Cys24. The region spanning Ile25–Glu55 is the LRRNT domain. Asn45 and Asn61 each carry an N-linked (GlcNAc...) asparagine glycan. 8 LRR repeats span residues Asn56 to Thr78, Asn79 to Ser100, Leu101 to Tyr121, Asn124 to Leu145, Ser147 to Lys168, Leu169 to Asn189, Asn192 to Gln213, and Gln216 to Leu239. A glycan (N-linked (GlcNAc...) asparagine) is linked at Asn103. N-linked (GlcNAc...) asparagine glycosylation is found at Asn152, Asn176, Asn189, Asn192, and Asn234. Ser/Thr-rich repeat units follow at residues Cys229 to Pro270, Pro271 to Leu292, Ser293 to Pro335, Glu336 to Pro377, and Val378 to Pro416. N-linked (GlcNAc...) asparagine glycosylation is found at Asn364 and Asn389. A lipid anchor (GPI-anchor amidated serine) is attached at Ser417. The propeptide at Ala418–Gly440 is removed in mature form. A glycan (N-linked (GlcNAc...) asparagine) is linked at Asn425.

In terms of assembly, binds to RTN4R. In terms of processing, O-glycosylated in its Ser/Thr-rich repeat domain. In terms of tissue distribution, oligodendrocytes and myelin of the central nervous system.

It localises to the cell membrane. Its function is as follows. Cell adhesion molecule contributing to the interactive process required for myelination in the central nervous system. This chain is Oligodendrocyte-myelin glycoprotein (Omg), found in Mus musculus (Mouse).